Here is a 277-residue protein sequence, read N- to C-terminus: Nickel import ATP-binding protein NikE (277 aa).

One can recognise an ABC transporter domain in the interval Tyr14 to Arg253. Gly46–Ser53 is a binding site for ATP.

This sequence belongs to the ABC transporter superfamily. Nickel importer (TC 3.A.1.5.3) family. As to quaternary structure, the complex is composed of two ATP-binding proteins (NikD and NikE), two transmembrane proteins (NikB and NikC) and a solute-binding protein (NikA).

Its subcellular location is the cell inner membrane. The enzyme catalyses Ni(2+)(out) + ATP + H2O = Ni(2+)(in) + ADP + phosphate + H(+). Functionally, part of the ABC transporter complex NikABCDE involved in nickel import. Responsible for energy coupling to the transport system. This Rhodospirillum rubrum (strain ATCC 11170 / ATH 1.1.1 / DSM 467 / LMG 4362 / NCIMB 8255 / S1) protein is Nickel import ATP-binding protein NikE.